We begin with the raw amino-acid sequence, 984 residues long: Translation initiation factor IF-2 (984 aa).

Disordered stretches follow at residues 92–267 (KKRT…ERRR) and 280–392 (MNAP…EEHV). Residues 104–123 (PATPEVQPVAEAPAAAPAAP) show a composition bias toward low complexity. Basic and acidic residues predominate over residues 124–177 (RIDEAELARREEEARRQAELIRRQEEELAEKRRLREEAEAREREQAEKAERAEQ). A compositionally biased stretch (low complexity) spans 193–235 (DAAAAAPAKEAAKPAAAPVAAAAAAAEQQAADTKLAAQTAATQ). Basic and acidic residues-rich tracts occupy residues 236–267 (AKED…ERRR) and 291–302 (KAPEKPQPEKAA). A compositionally biased stretch (low complexity) spans 310 to 335 (PAAPAARPGAPAAPGAAAAPGAAGAG). Residues 351-361 (PAKKKEIKTRG) show a composition bias toward basic and acidic residues. Positions 363-375 (ASGGVGRGNWRGG) are enriched in gly residues. Over residues 381–392 (GSNDRGGHEEHV) the composition is skewed to basic and acidic residues. The region spanning 484 to 653 (PRAPVVTVMG…LLQAEVLELK (170 aa)) is the tr-type G domain. The interval 493–500 (GHVDHGKT) is G1. 493-500 (GHVDHGKT) is a GTP binding site. The interval 518–522 (GITQH) is G2. The segment at 539 to 542 (DTPG) is G3. GTP contacts are provided by residues 539–543 (DTPGH) and 593–596 (NKID). The G4 stretch occupies residues 593-596 (NKID). The tract at residues 629–631 (SAK) is G5.

Belongs to the TRAFAC class translation factor GTPase superfamily. Classic translation factor GTPase family. IF-2 subfamily.

The protein resides in the cytoplasm. One of the essential components for the initiation of protein synthesis. Protects formylmethionyl-tRNA from spontaneous hydrolysis and promotes its binding to the 30S ribosomal subunits. Also involved in the hydrolysis of GTP during the formation of the 70S ribosomal complex. This chain is Translation initiation factor IF-2, found in Variovorax paradoxus (strain S110).